Consider the following 1323-residue polypeptide: MRGAGGPRGPRGPAKMLLLLALACASPFPEEVPGPGAAGGGTGGARPLNVALVFSGPAYAAEAARLGPAVAAAVRSPGLDVRPVALVLNGSDPRSLVLQLCDLLSGLRVHGVVFEDDSRAPAVAPILDFLSAQTSLPIVAVHGGAALVLTPKEKGSTFLQLGSSTEQQLQVIFEVLEEYDWTSFVAVTTRAPGHRAFLSYIEVLTDGSLVGWEHRGALTLDPGAGEAVLGAQLRSVSAQIRLLFCAREEAEPVFRAAEEAGLTGPGYVWFMVGPQLAGGGGSGVPGEPLLLPGGAPLPAGLFAVRSAGWRDDLARRVAAGVAVVARGAQALLRDYGFLPELGHDCRAQNRTHRGESLHRYFMNITWDNRDYSFNEDGFLVNPSLVVISLTRDRTWEVVGSWEQQTLRLKYPLWSRYGRFLQPVDDTQHLTVATLEERPFVIVEPADPISGTCIRDSVPCRSQLNRTHSPPPDAPRPEKRCCKGFCIDILKRLAHTIGFSYDLYLVTNGKHGKKIDGVWNGMIGEVFYQRADMAIGSLTINEERSEIVDFSVPFVETGISVMVARSNGTVSPSAFLEPYSPAVWVMMFVMCLTVVAVTVFIFEYLSPVGYNRSLATGKRPGGSTFTIGKSIWLLWALVFNNSVPVENPRGTTSKIMVLVWAFFAVIFLASYTANLAAFMIQEEYVDTVSGLSDRKFQRPQEQYPPLKFGTVPNGSTEKNIRSNYPDMHSYMVRYNQPRVEEALTQLKAGKLDAFIYDAAVLNYMARKDEGCKLVTIGSGKVFATTGYGIALHKGSRWKRPIDLALLQFLGDDEIEMLERLWLSGICHNDKIEVMSSKLDIDNMAGVFYMLLVAMGLSLLVFAWEHLVYWRLRHCLGPTHRMDFLLAFSRGMYSCCSAEAAPPPAKPPPPPQPLPSPAYPAARPPPGPAPFVPRERAAADRWRRAKGTGPPGGAALADGFHRYYGPIEPQGLGLGEARAAPRGAAGRPLSPPTTQPPQKPPPSYFAIVREQEPAEPPAGAFPGFPSPPAPPAAAAAAVGPPLCRLAFEDESPPAPSRWPRSDPESQPLLGGGAGGPSAGAPTAPPPRRAAPPPCAYLDLEPSPSDSEDSESLGGASLGGLEPWWFADFPYPYAERLGPPPGRYWSVDKLGGWRAGSWDYLPPRGGPAWHCRHCASLELLPPPRHLSCSHDGLDGGWWAPPPPPWAAGPPPRRRARCGCPRPHPHRPRASHRAPAAAPHHHRHRRAAGGWDLPPPAPTSRSLEDLSSCPRAAPTRRLTGPSRHARRCPHAAHWGPPLPTASHRRHRGGDLGTRRGSAHFSSLESEV.

The first 27 residues, 1-27 (MRGAGGPRGPRGPAKMLLLLALACASP), serve as a signal peptide directing secretion. Residues 28-579 (FPEEVPGPGA…SPSAFLEPYS (552 aa)) are Extracellular-facing. Asn-89 carries N-linked (GlcNAc...) asparagine glycosylation. The cysteines at positions 101 and 345 are disulfide-linked. 4 N-linked (GlcNAc...) asparagine glycosylation sites follow: Asn-349, Asn-363, Asn-381, and Asn-464. Cystine bridges form between Cys-452–Cys-480 and Cys-459–Cys-481. Residues Ser-536, Thr-538, and Arg-543 each contribute to the L-glutamate site. N-linked (GlcNAc...) asparagine glycosylation occurs at Asn-566. A helical membrane pass occupies residues 580-601 (PAVWVMMFVMCLTVVAVTVFIF). Residues 602 to 626 (EYLSPVGYNRSLATGKRPGGSTFTI) lie on the Cytoplasmic side of the membrane. Positions 627–638 (GKSIWLLWALVF) form an intramembrane region, discontinuously helical. The interval 628-647 (KSIWLLWALVFNNSVPVENP) is pore-forming. The Cytoplasmic portion of the chain corresponds to 639 to 650 (NNSVPVENPRGT). A helical membrane pass occupies residues 651–671 (TSKIMVLVWAFFAVIFLASYT). Over 672-840 (ANLAAFMIQE…EVMSSKLDID (169 aa)) the chain is Extracellular. The N-linked (GlcNAc...) asparagine glycan is linked to Asn-712. Residues Ser-714, Thr-715, and Asp-756 each contribute to the L-glutamate site. The cysteines at positions 770 and 825 are disulfide-linked. The chain crosses the membrane as a helical span at residues 841 to 864 (NMAGVFYMLLVAMGLSLLVFAWEH). Residues 865-1323 (LVYWRLRHCL…AHFSSLESEV (459 aa)) are Cytoplasmic-facing. Disordered regions lie at residues 897 to 952 (EAAP…PGGA), 977 to 1112 (AAPR…SLGG), and 1201 to 1323 (PWAA…ESEV). A compositionally biased stretch (pro residues) spans 899–929 (APPPAKPPPPPQPLPSPAYPAARPPPGPAPF). Basic and acidic residues predominate over residues 931–940 (PRERAAADRW). Positions 977-986 (AAPRGAAGRP) are enriched in low complexity. Residues 987-1001 (LSPPTTQPPQKPPPS) show a composition bias toward pro residues. A compositionally biased stretch (low complexity) spans 1030 to 1039 (AAAAAAVGPP). The span at 1080–1092 (TAPPPRRAAPPPC) shows a compositional bias: pro residues. A compositionally biased stretch (basic residues) spans 1208–1228 (PRRRARCGCPRPHPHRPRASH). Residue Arg-1303 is modified to Omega-N-methylarginine. Residue Ser-1313 is modified to Phosphoserine. A PDZ-binding motif is present at residues 1321 to 1323 (SEV).

The protein belongs to the glutamate-gated ion channel (TC 1.A.10.1) family. NR2D/GRIN2D subfamily. As to quaternary structure, heterotetramer. Forms heterotetrameric channels composed of two GluN1/zeta subunits (GRIN1), and two identical GluN2/epsilon subunits (GRIN2A, GRIN2B, GRIN2C or GRIN2D) or GluN3 subunits (GRIN3A or GRIN3B) (in vitro). In vivo, the subunit composition may depend on the expression levels of the different subunits. Interacts with PDZ domains of PATJ and DLG4. Detected in neonate brain synaptosomes (at protein level).

Its subcellular location is the cell membrane. The protein resides in the postsynaptic cell membrane. The catalysed reaction is Ca(2+)(in) = Ca(2+)(out). It catalyses the reaction Na(+)(in) = Na(+)(out). The enzyme catalyses K(+)(in) = K(+)(out). Functionally, component of N-methyl-D-aspartate (NMDA) receptors (NMDARs) that function as heterotetrameric, ligand-gated cation channels with high calcium permeability and voltage-dependent block by Mg(2+). Participates in synaptic plasticity for learning and memory formation. Channel activation requires binding of the neurotransmitter L-glutamate to the GluN2 subunit, glycine or D-serine binding to the GluN1 subunit, plus membrane depolarization to eliminate channel inhibition by Mg(2+). NMDARs mediate simultaneously the potasium efflux and the influx of calcium and sodium. Each GluN2 subunit confers differential attributes to channel properties, including activation, deactivation and desensitization kinetics, pH sensitivity, Ca2(+) permeability, and binding to allosteric modulators. The protein is Glutamate receptor ionotropic, NMDA 2D of Mus musculus (Mouse).